The chain runs to 336 residues: Prenytransferase ascA (336 aa).

The disordered stretch occupies residues 1–26 (MAAKSRSPKRGTSEKTPLVEKEAPYQ). Residues 11-23 (GTSEKTPLVEKEA) show a composition bias toward basic and acidic residues. 8 helical membrane passes run 52–72 (PHGNYMIYFPHIIGLMYASAI), 74–94 (PTELSVLGHRAAIFAIWTFLM), 131–151 (GHVFTLILTLLGFAAIQSLPI), 179–199 (VILGSTLASTIALSAYSVGLP), 206–226 (FVPTLCLSATIMLLVVFYDVV), 251–271 (LEGLFAFITLSIAGSLTTLGY), 272–292 (LVGMGHWFYLFSVGGLTFGLV), and 314–334 (FAILNLLTGFIMEYATKDYVV).

It belongs to the UbiA prenyltransferase family. The cofactor is Mg(2+).

It is found in the membrane. The enzyme catalyses orsellinate + (2E,6E)-farnesyl diphosphate = ilicicolinate B + diphosphate. The protein operates within secondary metabolite biosynthesis; terpenoid biosynthesis. Prenytransferase; part of the asc-1 gene cluster that mediates the biosynthesis of both ascochlorin and ascofuranone, a strong inhibitor of cyanide-insensitive alternative oxidases and a promising drug candidate against African trypanosomiasis. The first step in the pathway is performed by the non-reducing polyketide synthase ascC that produces orsellinic acid by condensing acetyl-CoA with 3 malonyl-CoA units. Orsellinic acid is then prenylated by the prenyltransferase ascA to yield ilicicolinic acid B. Ilicicolinic acid B is further reduced to ilicicolin B by the reductase ascB. The halogenase ascD then chlorinates ilicicolin B to produce ilicicolin A which is converted to ilicicolin A epoxide by the cytochrome P450 monooxygenase ascE that catalyzes stereoselective epoxidation of the terminal double bond of the prenyl group. Ilicicolin A epoxide is the last common precursor for the biosynthesis of ascofuranone and ascochlorin. The terpene cyclase ascF produces a monocyclic terpene, and the cyclization reaction is proposed to be initiated by protonation of the terminal epoxide of ilicicolin A epoxide to generate a monocyclic tertiarycation, which is followed by a series of hydride and methyl shifts with abstraction of proton, leading to the formation of the (14S,15R,19R)-trimethylcyclohexanone ring structure of ilicicolin C, which is finally reduced to ascochlorin by the dehydrogenase ascG. On the other hand, ilicicolin A epoxide is hydroxylated by the cytochrome P450 monooxygenase ascH, and the resultant product is cyclized by the terpene cyclase ascI to ascofuranol via protonation-initiated epoxide ring opening, which facilitates the 6-endo-tet cyclization to form the tetrahy-drofuran ring. Finally, ascofuranol is oxidized into ascofuranone by ascJ. This is Prenytransferase ascA from Acremonium egyptiacum (Oospora egyptiaca).